The primary structure comprises 1158 residues: Serine/threonine/tyrosine-interacting-like protein 2 (1158 aa).

Disordered stretches follow at residues 1 to 21, 280 to 303, 315 to 337, 360 to 392, 407 to 444, 492 to 527, 559 to 582, 597 to 622, 873 to 915, and 940 to 1135; these read MATR…DEAN, EERE…GTGS, EEED…QASK, LLSD…VERI, GYRR…ESVS, SRRY…GSEA, KDLG…KNPS, QKKV…LAKK, KVKE…CSSL, and SGLR…MDDE. Residues 8-19 show a composition bias toward acidic residues; that stretch reads EEEQVVPSEEDE. The 149-residue stretch at 132–280 folds into the Tyrosine-protein phosphatase domain; it reads NEVDEVWPNV…LRELNEKLME (149 aa). The segment covering 322 to 337 has biased composition (polar residues); sequence SHLSGSSLGKATQASK. Residue Ser-377 is modified to Phosphoserine. Residue Thr-433 is modified to Phosphothreonine. Residues 435-444 are compositionally biased toward low complexity; sequence SESSAWESVS. Over residues 500 to 517 the composition is skewed to basic and acidic residues; that stretch reads KREEAADRSSEAGSRVRE. Ser-509 bears the Phosphoserine mark. A compositionally biased stretch (basic and acidic residues) spans 600-619; it reads VGSENKEEVVELSKGEDSAL. Residues 877–890 are compositionally biased toward acidic residues; it reads DEDDGVGDGDEDTD. 2 stretches are compositionally biased toward polar residues: residues 897-914 and 952-966; these read RYSS…TCSS and SDWS…TRSS. The span at 974–983 shows a compositional bias: low complexity; the sequence is KSSSYKFSKS. Phosphoserine is present on Ser-985. The segment covering 990-999 has biased composition (polar residues); that stretch reads TSSYHEANGN. Residues 1000-1012 are compositionally biased toward low complexity; the sequence is SVRSTSRFSSSST. Ser-1036 is subject to Phosphoserine. 3 stretches are compositionally biased toward basic and acidic residues: residues 1044–1056, 1064–1079, and 1094–1111; these read RTPE…ESPE, RSRD…KSDF, and RSEE…EEGR. The span at 1126-1135 shows a compositional bias: acidic residues; that stretch reads REEEEEMDDE.

This sequence belongs to the protein-tyrosine phosphatase family. Non-receptor class dual specificity subfamily.

It is found in the cytoplasm. It localises to the myofibril. Its subcellular location is the sarcomere. May be required for myofiber maturation. This is Serine/threonine/tyrosine-interacting-like protein 2 from Homo sapiens (Human).